A 186-amino-acid chain; its full sequence is Peptidyl-tRNA hydrolase (186 aa).

Y16 is a binding site for tRNA. H21 functions as the Proton acceptor in the catalytic mechanism. Y60 and N62 together coordinate tRNA.

The protein belongs to the PTH family. Monomer.

The protein resides in the cytoplasm. The enzyme catalyses an N-acyl-L-alpha-aminoacyl-tRNA + H2O = an N-acyl-L-amino acid + a tRNA + H(+). Its function is as follows. Hydrolyzes ribosome-free peptidyl-tRNAs (with 1 or more amino acids incorporated), which drop off the ribosome during protein synthesis, or as a result of ribosome stalling. Functionally, catalyzes the release of premature peptidyl moieties from peptidyl-tRNA molecules trapped in stalled 50S ribosomal subunits, and thus maintains levels of free tRNAs and 50S ribosomes. The protein is Peptidyl-tRNA hydrolase of Tropheryma whipplei (strain Twist) (Whipple's bacillus).